The following is a 306-amino-acid chain: Mitochondrial substrate carrier family protein ucpA (306 aa).

Residues 1–15 (MSVNLNNNKNNKNKV) lie on the Mitochondrial intermembrane side of the membrane. Solcar repeat units lie at residues 13 to 103 (NKVA…ISNA), 112 to 204 (YFFL…CKNL), and 211 to 301 (DGIY…FKKL). Residues 16 to 36 (AIGFISGSLASICATTVTNPI) form a helical membrane-spanning segment. Topologically, residues 37 to 83 (ELVKTRLQLQGELQLSQRIYNGVWDAFKQIYKTEGIRGLQSGLIPAY) are mitochondrial matrix. The helical transmembrane segment at 84 to 103 (FSQATMQGIRLGSFDLISNA) threads the bilayer. Residues 104–117 (LGAKPNQDYFFLKN) are Mitochondrial intermembrane-facing. Residues 118 to 138 (LLAGATAGAIGAAAGSPFDLV) traverse the membrane as a helical segment. Topologically, residues 139 to 174 (KVRMQAANMYKNDPQFVGYSSSFAAFKQIIQKEGFK) are mitochondrial matrix. The chain crosses the membrane as a helical span at residues 175–195 (GLTRGMLTSAQRTAVGSAIQL). Residues 196–211 (STYGSCKNLVLNFVDD) lie on the Mitochondrial intermembrane side of the membrane. Residues 212–232 (GIYAYIISSMVAGFIVTFGMN) traverse the membrane as a helical segment. Over 233 to 276 (PFDVARTRLYFQGKGNSHGEIYKGLMDCVYKTVKKEGFGAVYKG) the chain is Mitochondrial matrix. The helical transmembrane segment at 277-295 (FWAHYLRLGPHTILTLVFW) threads the bilayer. Residues 296 to 306 (EQFKKLFSGEL) lie on the Mitochondrial intermembrane side of the membrane.

The protein belongs to the mitochondrial carrier (TC 2.A.29) family.

Its subcellular location is the mitochondrion inner membrane. In terms of biological role, mitochondrial solute carriers shuttle metabolites, nucleotides, and cofactors through the mitochondrial inner membrane. Transports oxaloacetate and sulfate. The chain is Mitochondrial substrate carrier family protein ucpA (ucpA) from Dictyostelium discoideum (Social amoeba).